The chain runs to 166 residues: 3-isopropylmalate dehydratase small subunit 1 (166 aa).

It belongs to the LeuD family. LeuD type 2 subfamily. Heterodimer of LeuC and LeuD.

The catalysed reaction is (2R,3S)-3-isopropylmalate = (2S)-2-isopropylmalate. It functions in the pathway amino-acid biosynthesis; L-leucine biosynthesis; L-leucine from 3-methyl-2-oxobutanoate: step 2/4. Catalyzes the isomerization between 2-isopropylmalate and 3-isopropylmalate, via the formation of 2-isopropylmaleate. The protein is 3-isopropylmalate dehydratase small subunit 1 (leuD1) of Thermotoga maritima (strain ATCC 43589 / DSM 3109 / JCM 10099 / NBRC 100826 / MSB8).